A 418-amino-acid chain; its full sequence is MEPYSCDTFVALPPATVGNRVIFGKNSDRLFDEVQEVIYCPAAVHNDLEKRLKCTYIEVDQVPETYAVVLSRPAWLWGAEMGANEHGVCIGNEAVWGREDISKEEALLGMDLVRLGLERADTAEKALDVIVDLLEKYGQGGNCAEGKEFSYYNSFLIADRNEAWILETSGKYWAAERVQGVRNISNQLSITTKIDREHPDMRNYAKQRGWWDGKEEFDFTAAYSYIDTAAMMTSPSRYCQGYKLLDKHRGNITFETMMEILRDRPSGINMKGEFLTTASMVSVLPQDPSLPCIHLFTATPHPERSVFKPFIFVPHISPLLDTKSPTFEPERPVAKKPYVKPDRRHPLYQKHQEALEMISNSKEKGKTILDKMRKLEKAVSEEIESILQSGHLDEEKTVNLFPQYVKDEIKIYQSNISS.

The propeptide occupies 1–5 (MEPYS). The active site involves Cys-6. Cys-6 bears the Glyoxylic acid (Cys); alternate mark. Cys-6 bears the Pyruvic acid (Cys); alternate mark.

The protein belongs to the peptidase C69 family. Secernin subfamily.

Its function is as follows. Plays a role in thermal nociception. The chain is Secernin-3 (Scrn3) from Mus musculus (Mouse).